A 912-amino-acid polypeptide reads, in one-letter code: Type II beta methyltransferase M.BslI (912 aa).

Belongs to the N(4)/N(6)-methyltransferase family. N(4) subfamily.

The enzyme catalyses a 2'-deoxycytidine in DNA + S-adenosyl-L-methionine = an N(4)-methyl-2'-deoxycytidine in DNA + S-adenosyl-L-homocysteine + H(+). A beta subtype methylase. Recognizes the double-stranded sequence 5'-CCN(7)GG-3', methylates C-2 on both strands, and protects the DNA from cleavage by the BslI endonuclease. The protein is Type II beta methyltransferase M.BslI (bslIM) of Bacillus sp. (strain NEB-606).